Reading from the N-terminus, the 1620-residue chain is Myb-like protein X (1620 aa).

Residues 1–13 (MSTIGNNASSIGN) are compositionally biased toward polar residues. Disordered regions lie at residues 1–57 (MSTI…TTTT), 176–204 (TGSG…SNIG), 294–318 (FFQD…NMTE), and 450–849 (KEEK…TKSA). Residues 28-57 (PPTTTTTTTTTTTTTTTTPTTTTPTTTTTT) show a composition bias toward low complexity. Residues 177-187 (GSGGIGGGGSG) are compositionally biased toward gly residues. The region spanning 310-421 (GSGSNNMTEI…CFVNSGDYMN (112 aa)) is the SWIRM domain. Positions 450–497 (KEEKERLEREEKERLEREEKQEKEEKERLEKEEKERLEREEKQEKEEK) are enriched in basic and acidic residues. Residues 498-511 (EEKEEKEENEEKEE) are compositionally biased toward acidic residues. Positions 512–568 (KEEKEKEEKEEKEKQEKEDDKEKQENENEQEKIEKKENKNDSQNKEIKENHDKKDET) are enriched in basic and acidic residues. Residues 570 to 598 (DSNNTTTTTTTTTTTSTNTLVAESSSSSS) are compositionally biased toward low complexity. Residues 606-628 (KEMKEQPVQENKDKEMMETDTTK) show a composition bias toward basic and acidic residues. Over residues 629-645 (ENNGVETTETTNQTTDS) the composition is skewed to low complexity. The segment covering 647–798 (ETDKEMKDQP…EIKKDKLKEN (152 aa)) has biased composition (basic and acidic residues). Acidic residues predominate over residues 799–834 (EEVEGEIEGENDEGEVVEEDEDEEMEIEEDEEDEED). Residues 925–977 (PEEFGWTDIETLLLLEGIEIFRDNWQEISDYIGGSKTPEQCLTHFIRLPIEDE) form the SANT domain. The interval 1049–1506 (QPSKEELERI…DDDEDVEMET (458 aa)) is disordered. Basic and acidic residues-rich tracts occupy residues 1051 to 1195 (SKEE…DKSD), 1219 to 1255 (ETVE…KDDN), and 1264 to 1302 (HNKE…EKDL). Low complexity predominate over residues 1303 to 1325 (NNLSESQSSNDQSKSNEQMSSDN). The segment covering 1338–1350 (TQITSKEQNITTD) has biased composition (polar residues). Composition is skewed to low complexity over residues 1358-1382 (TPTT…TTNT) and 1390-1416 (NETN…ESNN). 2 stretches are compositionally biased toward acidic residues: residues 1467–1481 (EENE…ENDL) and 1493–1504 (VGEEDDDEDVEM).

The protein localises to the nucleus. The polypeptide is Myb-like protein X (mybX) (Dictyostelium discoideum (Social amoeba)).